Consider the following 140-residue polypeptide: uncharacterized protein (140 aa).

N-linked (GlcNAc...) asparagine; by host glycosylation is present at Asn-86. Residues 92 to 112 (IFNGLGFILIVIFIYLLLITL) form a helical membrane-spanning segment.

It belongs to the asfivirus B117L family.

The protein localises to the host membrane. The protein resides in the virion. This is an uncharacterized protein from African swine fever virus (isolate Pig/Kenya/KEN-50/1950) (ASFV).